We begin with the raw amino-acid sequence, 114 residues long: Cytochrome b-c1 complex subunit 1, mitochondrial (114 aa).

Position 31 is an N6-acetyllysine (lysine 31).

The protein belongs to the peptidase M16 family. UQCRC1/QCR1 subfamily. Component of the ubiquinol-cytochrome c oxidoreductase (cytochrome b-c1 complex, complex III, CIII), a multisubunit enzyme composed of 11 subunits. The complex is composed of 3 respiratory subunits cytochrome b, cytochrome c1 and Rieske protein UQCRFS1, 2 core protein subunits UQCRC1/QCR1 and UQCRC2/QCR2, and 6 low-molecular weight protein subunits UQCRH/QCR6, UQCRB/QCR7, UQCRQ/QCR8, UQCR10/QCR9, UQCR11/QCR10 and subunit 9, the cleavage product of Rieske protein UQCRFS1. The complex exists as an obligatory dimer and forms supercomplexes (SCs) in the inner mitochondrial membrane with NADH-ubiquinone oxidoreductase (complex I, CI) and cytochrome c oxidase (complex IV, CIV), resulting in different assemblies (supercomplex SCI(1)III(2)IV(1) and megacomplex MCI(2)III(2)IV(2)). Interacts with UQCC6. Interacts with STMP1.

It localises to the mitochondrion inner membrane. Its function is as follows. Component of the ubiquinol-cytochrome c oxidoreductase, a multisubunit transmembrane complex that is part of the mitochondrial electron transport chain which drives oxidative phosphorylation. The respiratory chain contains 3 multisubunit complexes succinate dehydrogenase (complex II, CII), ubiquinol-cytochrome c oxidoreductase (cytochrome b-c1 complex, complex III, CIII) and cytochrome c oxidase (complex IV, CIV), that cooperate to transfer electrons derived from NADH and succinate to molecular oxygen, creating an electrochemical gradient over the inner membrane that drives transmembrane transport and the ATP synthase. The cytochrome b-c1 complex catalyzes electron transfer from ubiquinol to cytochrome c, linking this redox reaction to translocation of protons across the mitochondrial inner membrane, with protons being carried across the membrane as hydrogens on the quinol. In the process called Q cycle, 2 protons are consumed from the matrix, 4 protons are released into the intermembrane space and 2 electrons are passed to cytochrome c. The 2 core subunits UQCRC1/QCR1 and UQCRC2/QCR2 are homologous to the 2 mitochondrial-processing peptidase (MPP) subunits beta-MPP and alpha-MPP respectively, and they seem to have preserved their MPP processing properties. May be involved in the in situ processing of UQCRFS1 into the mature Rieske protein and its mitochondrial targeting sequence (MTS)/subunit 9 when incorporated into complex III. Seems to play an important role in the maintenance of proper mitochondrial function in nigral dopaminergic neurons. The polypeptide is Cytochrome b-c1 complex subunit 1, mitochondrial (Mesocricetus auratus (Golden hamster)).